We begin with the raw amino-acid sequence, 241 residues long: Phosphoadenosine 5'-phosphosulfate reductase (241 aa).

The active-site Nucleophile; cysteine thiosulfonate intermediate is Cys235.

This sequence belongs to the PAPS reductase family. CysH subfamily.

Its subcellular location is the cytoplasm. It catalyses the reaction [thioredoxin]-disulfide + sulfite + adenosine 3',5'-bisphosphate + 2 H(+) = [thioredoxin]-dithiol + 3'-phosphoadenylyl sulfate. The protein operates within sulfur metabolism; hydrogen sulfide biosynthesis; sulfite from sulfate: step 3/3. Its function is as follows. Catalyzes the formation of sulfite from phosphoadenosine 5'-phosphosulfate (PAPS) using thioredoxin as an electron donor. The sequence is that of Phosphoadenosine 5'-phosphosulfate reductase from Xanthomonas axonopodis pv. citri (strain 306).